The following is a 338-amino-acid chain: Outer membrane transporter protein TsaT (338 aa).

The first 22 residues, methionine 1–alanine 22, serve as a signal peptide directing secretion.

As to quaternary structure, part of a two-component transport system composed of TsaT and TsaS.

The protein resides in the cell outer membrane. Its function is as follows. Involved in the uptake of p-toluenesulphonate (TSA). Forms a large, general diffusion pore with a preference for anions. This chain is Outer membrane transporter protein TsaT (tsaT), found in Comamonas testosteroni (Pseudomonas testosteroni).